We begin with the raw amino-acid sequence, 201 residues long: Syndecan-2 (201 aa).

A signal peptide spans 1–18 (MRRAWILLTLGLVACVSA). The Extracellular portion of the chain corresponds to 19–144 (ESRAELTSDK…HSDSLFKRTE (126 aa)). 3 O-linked (Xyl...) (glycosaminoglycan) serine glycosylation sites follow: serine 41, serine 55, and serine 57. Disordered stretches follow at residues 42–70 (GVYP…ELTT) and 90–130 (TLNI…DTNV). The segment covering 90-102 (TLNIQNKIPAQTK) has biased composition (polar residues). O-linked (GalNAc...) threonine glycosylation occurs at threonine 101. Positions 103 to 123 (SPEETDKEKVHLSDSERKMDP) are enriched in basic and acidic residues. Serine 115 is subject to Phosphoserine; by FAM20C. The chain crosses the membrane as a helical span at residues 145–169 (VLAAVIAGGVIGFLFAIFLILLLVY). At 170–201 (RMRKKDEGSYDLGERKPSSAAYQKAPTKEFYA) the chain is on the cytoplasmic side. The segment at 178–201 (SYDLGERKPSSAAYQKAPTKEFYA) is disordered. Position 187 is a phosphoserine (serine 187).

The protein belongs to the syndecan proteoglycan family. Interacts (via cytoplasmic domain) with SARM1. Forms a complex with SDCBP and PDCD6IP. Post-translationally, O-glycosylated with core 1 or possibly core 8 glycans. Contains heparan sulfate. Also contains chondroitin sulfate.

The protein localises to the membrane. Its function is as follows. Cell surface proteoglycan which regulates dendritic arbor morphogenesis. The protein is Syndecan-2 (SDC2) of Homo sapiens (Human).